Consider the following 284-residue polypeptide: Acetylglutamate kinase (284 aa).

Substrate is bound by residues 64–65 (GG), Arg86, and Asn179.

Belongs to the acetylglutamate kinase family. ArgB subfamily.

The protein resides in the cytoplasm. It carries out the reaction N-acetyl-L-glutamate + ATP = N-acetyl-L-glutamyl 5-phosphate + ADP. It participates in amino-acid biosynthesis; L-arginine biosynthesis; N(2)-acetyl-L-ornithine from L-glutamate: step 2/4. Its function is as follows. Catalyzes the ATP-dependent phosphorylation of N-acetyl-L-glutamate. The polypeptide is Acetylglutamate kinase (Acaryochloris marina (strain MBIC 11017)).